Reading from the N-terminus, the 197-residue chain is dITP/XTP pyrophosphatase (197 aa).

Substrate is bound at residue 10-15 (TKNQGK). Asp70 (proton acceptor) is an active-site residue. Residue Asp70 coordinates Mg(2+). Substrate-binding positions include Ser71, 151–154 (FGYD), Lys173, and 178–179 (HR).

It belongs to the HAM1 NTPase family. As to quaternary structure, homodimer. The cofactor is Mg(2+).

The catalysed reaction is XTP + H2O = XMP + diphosphate + H(+). The enzyme catalyses dITP + H2O = dIMP + diphosphate + H(+). It carries out the reaction ITP + H2O = IMP + diphosphate + H(+). Its function is as follows. Pyrophosphatase that catalyzes the hydrolysis of nucleoside triphosphates to their monophosphate derivatives, with a high preference for the non-canonical purine nucleotides XTP (xanthosine triphosphate), dITP (deoxyinosine triphosphate) and ITP. Seems to function as a house-cleaning enzyme that removes non-canonical purine nucleotides from the nucleotide pool, thus preventing their incorporation into DNA/RNA and avoiding chromosomal lesions. The protein is dITP/XTP pyrophosphatase of Symbiobacterium thermophilum (strain DSM 24528 / JCM 14929 / IAM 14863 / T).